A 1255-amino-acid polypeptide reads, in one-letter code: Bifunctional autolysin (1255 aa).

An N-terminal signal peptide occupies residues 1–36 (MLGVINRMAKKFNYKLPSMVALTLVGSAVTAHQVQA). Disordered regions lie at residues 110–141 (GDTR…NTNV) and 193–218 (VTTF…KYKP). The segment at 199 to 775 (SAQPRSVAAT…VAQPKTAVKA (577 aa)) is N-acetylmuramoyl-L-alanine amidase. GW domains lie at 442 to 516 (TVAA…YNTA), 518 to 592 (SPVN…DTAK), 611 to 685 (TVSS…YNNA), 687 to 761 (SPVN…VPAA), 783 to 858 (TTQT…VQNL), 860 to 935 (KEVK…APTA), and 942 to 1016 (AAKD…KELI). Residues 776 to 1255 (YTVTKPQTTQ…GKYFDIPQYK (480 aa)) form an endo-beta-N-acetylglucosaminidase region.

In the N-terminal section; belongs to the N-acetylmuramoyl-L-alanine amidase 2 family. This sequence in the C-terminal section; belongs to the glycosyl hydrolase 73 family. As to quaternary structure, oligomer; forms a ring structure at the cell surface which is important for efficient partitioning of daughter cells after cell division. Undergoes proteolytic processing to generate the two extracellular lytic enzymes, probably at the septal region on the cell surface.

It is found in the secreted. The enzyme catalyses Hydrolyzes the link between N-acetylmuramoyl residues and L-amino acid residues in certain cell-wall glycopeptides.. It catalyses the reaction an N(4)-(oligosaccharide-(1-&gt;3)-[oligosaccharide-(1-&gt;6)]-beta-D-Man-(1-&gt;4)-beta-D-GlcNAc-(1-&gt;4)-alpha-D-GlcNAc)-L-asparaginyl-[protein] + H2O = an oligosaccharide-(1-&gt;3)-[oligosaccharide-(1-&gt;6)]-beta-D-Man-(1-&gt;4)-D-GlcNAc + N(4)-(N-acetyl-beta-D-glucosaminyl)-L-asparaginyl-[protein]. Functionally, endohydrolysis of the di-N-acetylchitobiosyl unit in high-mannose glycopeptides and glycoproteins containing the -[(Man)5(GlcNAc)2]-Asn structure. One N-acetyl-D-glucosamine residue remains attached to the protein; the rest of the oligosaccharide is released intact. Cleaves the peptidoglycan connecting the daughter cells at the end of the cell division cycle, resulting in the separation of the two newly divided cells. Acts as an autolysin in penicillin-induced lysis. The sequence is that of Bifunctional autolysin (atl) from Staphylococcus aureus (strain Mu3 / ATCC 700698).